A 185-amino-acid chain; its full sequence is Protein-lysine palmitoyltransferase CyaC (185 aa).

Catalysis depends on residues His33 and Asp102.

It belongs to the RTX toxin acyltransferase family. As to quaternary structure, homodimer.

It localises to the cytoplasm. It catalyses the reaction hexadecanoyl-[ACP] + L-lysyl-[protein] = N(6)-hexadecanoyl-L-lysyl-[protein] + holo-[ACP] + H(+). The catalysed reaction is (9Z)-hexadecenoyl-[ACP] + L-lysyl-[protein] = N(6)-[(9Z)-hexadecenoyl]-L-lysyl-[protein] + holo-[ACP] + H(+). Functionally, protein-lysine palmitoyltransferase that catalyzes palmitoylation of the protoxin (CyaA) at two internal lysine residues, thereby converting it to the active toxin. The sequence is that of Protein-lysine palmitoyltransferase CyaC from Bordetella bronchiseptica (strain ATCC BAA-588 / NCTC 13252 / RB50) (Alcaligenes bronchisepticus).